Reading from the N-terminus, the 126-residue chain is Protein translocase subunit SecE (126 aa).

Helical transmembrane passes span 20–40, 42–62, and 97–117; these read WLAAFVLAAAAVVGNYLYGEM, VVVRAAGVVVLIAAALGVAAT, and IVLAVSIVMALVLWGIDGIMV.

Belongs to the SecE/SEC61-gamma family. Component of the Sec protein translocase complex. Heterotrimer consisting of SecY, SecE and SecG subunits. The heterotrimers can form oligomers, although 1 heterotrimer is thought to be able to translocate proteins. Interacts with the ribosome. Interacts with SecDF, and other proteins may be involved. Interacts with SecA.

Its subcellular location is the cell inner membrane. In terms of biological role, essential subunit of the Sec protein translocation channel SecYEG. Clamps together the 2 halves of SecY. May contact the channel plug during translocation. The sequence is that of Protein translocase subunit SecE from Vibrio alginolyticus.